Here is a 634-residue protein sequence, read N- to C-terminus: Mitochondrial Rho GTPase 1 (634 aa).

Residues 1–604 (MLCCMRICVC…PRSEEDVEGK (604 aa)) are Cytoplasmic-facing. Positions 2–171 (LCCMRICVCG…FFLCQKAVTH (170 aa)) constitute a Miro 1 domain. Residues 11-18 (GDEGTGKS), 60-64 (DTSAV), and 116-119 (NKSD) contribute to the GTP site. 2 EF-hand domains span residues 187–222 (AAVA…CFEK) and 307–342 (EGYR…TPGL). Positions 200, 202, 204, 206, 211, 320, 322, 324, and 331 each coordinate Ca(2+). The interval 399-419 (NPSTTAALKVTRPRKRRKRPG) is disordered. A compositionally biased stretch (basic residues) spans 409 to 419 (TRPRKRRKRPG). The Miro 2 domain maps to 423–589 (RNVVLGHIVG…FVHIAEAAME (167 aa)). Residues 432-439 (GAPGSGKS), 468-472 (ELPGG), and 538-541 (LKAD) each bind GTP. The chain crosses the membrane as a helical; Anchor for type IV membrane protein span at residues 605–625 (WMSWGIALGAVVCAGAAAVMI). The Mitochondrial intermembrane segment spans residues 626-634 (WRRVSGSGV).

This sequence belongs to the mitochondrial Rho GTPase family.

The protein resides in the mitochondrion outer membrane. Its function is as follows. Mitochondrial GTPase involved in mitochondrial trafficking. Probably involved in control of anterograde transport of mitochondria and their subcellular distribution. In Emericella nidulans (strain FGSC A4 / ATCC 38163 / CBS 112.46 / NRRL 194 / M139) (Aspergillus nidulans), this protein is Mitochondrial Rho GTPase 1 (gem1).